The following is a 170-amino-acid chain: F107 fimbrial protein (170 aa).

The N-terminal stretch at 1-21 (MKRLVFISFVALSMTAGSAMA) is a signal peptide. A disulfide bridge links C37 with C78.

The protein belongs to the fimbrial protein family.

It localises to the fimbrium. In terms of biological role, fimbriae (also called pili), polar filaments radiating from the surface of the bacterium to a length of 0.5-1.5 micrometers and numbering 100-300 per cell, enable bacteria to colonize the epithelium of specific host organs. The chain is F107 fimbrial protein (fedA) from Escherichia coli.